The chain runs to 796 residues: MAINNTGSRRLLVTLTALFAALCGLYLLIGGGWLVAIGGSWYYPIAGLVMLGVAWMLWRSKRAALWLYAALLLGTMIWGVWEVGFDFWALTPRSDILVFFGIWLILPFVWRRLVIPASGAVAALVVALLISGGILTWAGFNDPQEINGTLSADATPAEAISPVADQDWPAYGRNQEGQRFSPLKQINADNVHNLKEAWVFRTGDVKQPNDPGEITNEVTPIKVGDTLYLCTAHQRLFALDAASGKEKWHYDPELKTNESFQHVTCRGVSYHEAKAETASPEVMADCPRRIILPVNDGRLIAINAENGKLCETFANKGVLNLQSNMPDTKPGLYEPTSPPIITDKTIVMAGSVTDNFSTRETSGVIRGFDVNTGELLWAFDPGAKDPNAIPSDEHTFTFNSPNSWAPAAYDAKLDLVYLPMGVTTPDIWGGNRTPEQERYASSILALNATTGKLAWSYQTVHHDLWDMDLPAQPTLADITVNGQKVPVIYAPAKTGNIFVLDRRNGELVVPAPEKPVPQGAAKGDYVTPTQPFSELSFRPTKDLSGADMWGATMFDQLVCRVMFHQMRYEGIFTPPSEQGTLVFPGNLGMFEWGGISVDPNREVAIANPMALPFVSKLIPRGPGNPMEQPKDAKGTGTESGIQPQYGVPYGVTLNPFLSPFGLPCKQPAWGYISALDLKTNEVVWKKRIGTPQDSMPFPMPVPVPFNMGMPMLGGPISTAGNVLFIAATADNYLRAYNMSNGEKLWQGRLPAGGQATPMTYEVNGKQYVVISAGGHGSFGTKMGDYIVAYALPDDVK.

The Cytoplasmic segment spans residues 1–10; that stretch reads MAINNTGSRR. The helical transmembrane segment at 11–37 threads the bilayer; it reads LLVTLTALFAALCGLYLLIGGGWLVAI. The Periplasmic segment spans residues 38-40; it reads GGS. The chain crosses the membrane as a helical span at residues 41 to 58; the sequence is WYYPIAGLVMLGVAWMLW. Over 59–62 the chain is Cytoplasmic; sequence RSKR. Residues 63–81 form a helical membrane-spanning segment; the sequence is AALWLYAALLLGTMIWGVW. Topologically, residues 82 to 95 are periplasmic; sequence EVGFDFWALTPRSD. The chain crosses the membrane as a helical span at residues 96-110; sequence ILVFFGIWLILPFVW. Topologically, residues 111–118 are cytoplasmic; that stretch reads RRLVIPAS. The helical transmembrane segment at 119 to 141 threads the bilayer; it reads GAVAALVVALLISGGILTWAGFN. Residues 142–796 are Periplasmic-facing; the sequence is DPQEINGTLS…VAYALPDDVK (655 aa). Aspartate 466 functions as the Proton acceptor in the catalytic mechanism.

The protein belongs to the bacterial PQQ dehydrogenase family. In terms of assembly, monomer. Pyrroloquinoline quinone is required as a cofactor.

Its subcellular location is the cell inner membrane. The enzyme catalyses a ubiquinone + D-glucose = D-glucono-1,5-lactone + a ubiquinol. In terms of biological role, GDH is probably involved in energy conservation rather than in sugar metabolism. This Escherichia coli (strain K12) protein is Quinoprotein glucose dehydrogenase (gcd).